The sequence spans 264 residues: Alkaline ceramidase 1 (264 aa).

The Lumenal segment spans residues 1 to 27 (MPSIFAYQSSEVDWCESNFQYSELVAE). Ca(2+) contacts are provided by aspartate 13, tryptophan 14, glutamate 16, asparagine 18, and glutamate 27. The helical transmembrane segment at 28-48 (FYNTFSNIPFFIFGPLMMLLM) threads the bilayer. Over 49 to 57 (HPYAQKRSR) the chain is Cytoplasmic. Residues 58-78 (YIYVVWVLFMIIGLFSMYFHM) form a helical membrane-spanning segment. Histidine 77 lines the Zn(2+) pocket. Residues 79-81 (TLS) are Lumenal-facing. The chain crosses the membrane as a helical span at residues 82–102 (FLGQLLDEIAILWLLGSGYSI). The Cytoplasmic portion of the chain corresponds to 103–119 (WMPRCYFPSFLGGNRSQ). The helical transmembrane segment at 120-137 (FIRLVFITTVVSTLLSFL) threads the bilayer. Residue arginine 138 is a topological domain, lumenal. A helical membrane pass occupies residues 139–159 (PTVNAYALNSIALHILYIVCQ). Residues 160 to 176 (EYRKTSNKELRHLIEVS) are Cytoplasmic-facing. A helical membrane pass occupies residues 177 to 197 (VVLWAVALTSWISDRLLCSFW). Over 198–206 (QRIHFFYLH) the chain is Lumenal. Positions 206 and 210 each coordinate Zn(2+). Residues 207–227 (SIWHVLISITFPYGMVTMALV) form a helical membrane-spanning segment. Over 228 to 264 (DANYEMPGETLKVRYWPRDSWPVGLPYVEIRGDDKDC) the chain is Cytoplasmic.

Belongs to the alkaline ceramidase family. The cofactor is Zn(2+). As to expression, mainly expressed in epidermis.

The protein resides in the endoplasmic reticulum membrane. It catalyses the reaction an N-acylsphing-4-enine + H2O = sphing-4-enine + a fatty acid. The enzyme catalyses N-tetracosanoyl-sphing-4-enine + H2O = tetracosanoate + sphing-4-enine. It carries out the reaction an N-acylsphinganine + H2O = sphinganine + a fatty acid. The catalysed reaction is N-(9Z-octadecenoyl)-sphing-4-enine + H2O = sphing-4-enine + (9Z)-octadecenoate. It catalyses the reaction N-(15Z-tetracosenoyl)-sphing-4-enine + H2O = (15Z)-tetracosenoate + sphing-4-enine. It participates in lipid metabolism; sphingolipid metabolism. Its activity is regulated as follows. Inhibited by sphingosine. Activity is Ca(2+)-dependent. Endoplasmic reticulum ceramidase that catalyzes the hydrolysis of ceramides into sphingosine and free fatty acids at alkaline pH. Ceramides, sphingosine, and its phosphorylated form sphingosine-1-phosphate are bioactive lipids that mediate cellular signaling pathways regulating several biological processes including cell proliferation, apoptosis and differentiation. Exhibits a strong substrate specificity towards the natural stereoisomer of ceramides with D-erythro-sphingosine as a backbone and has a higher activity towards very long-chain unsaturated fatty acids like the C24:1-ceramide. May also hydrolyze dihydroceramides to produce dihydrosphingosine. ACER1 is a skin-specific ceramidase that regulates the levels of ceramides, sphingosine and sphingosine-1-phosphate in the epidermis, mediates the calcium-induced differentiation of epidermal keratinocytes and more generally plays an important role in skin homeostasis. The chain is Alkaline ceramidase 1 from Homo sapiens (Human).